The sequence spans 371 residues: UPF0284 protein tll2306 (371 aa).

Belongs to the UPF0284 family.

This Thermosynechococcus vestitus (strain NIES-2133 / IAM M-273 / BP-1) protein is UPF0284 protein tll2306.